Consider the following 434-residue polypeptide: Protein maelstrom homolog (434 aa).

A DNA-binding region (HMG box) is located at residues 4-73 (RKASRNAYYF…AQGKDSGPSE (70 aa)). 2 disordered regions span residues 62-94 (RAAQ…KQNV) and 357-385 (SHFN…SGQN). Residues 357–371 (SHFNSANQEQRSNTP) show a composition bias toward polar residues.

The protein belongs to the maelstrom family. As to quaternary structure, interacts with SMARCB1, SIN3B and DDX4. Interacts with piRNA-associated proteins TDRD1, PIWIL1 and PIWIL2. Interacts with TEX19.

It localises to the cytoplasm. It is found in the nucleus. Plays a central role during spermatogenesis by repressing transposable elements and preventing their mobilization, which is essential for the germline integrity. Acts via the piRNA metabolic process, which mediates the repression of transposable elements during meiosis by forming complexes composed of piRNAs and Piwi proteins and governs the methylation and subsequent repression of transposons. Its association with piP-bodies suggests a participation in the secondary piRNAs metabolic process. Required for the localization of germ-cell factors to the meiotic nuage. The sequence is that of Protein maelstrom homolog (MAEL) from Macaca fascicularis (Crab-eating macaque).